We begin with the raw amino-acid sequence, 366 residues long: MRVLAAMSGGVDSAVAAARAVEAGHEVVGVHLALSRLPGTLHTGSRGCCTIEDSMDAQRAANVIGIPYYVWDFSERFALDVVDDFIAEYSAGRTPNPCMRCNEKIKFAALLEKALDLGFDAVCTGHYASIVTDADGNRELHRASAWAKDQSYVLGVLTADQLAHSMFPLGVTPSKAEVRAEAAARGLTVAAKPDSHDICFIPDGDTRGWLAERVGAETGDILDRSGARIGTHEGAHAYTVGQRKGLNIGFPSPDGRPRFVLEVRPKDNTVVVGPKEALDIAEIAGARYTWAGTPPASPDTPFACEVQIRAHADPVPAVARVAGGELVIRPDAPLNGVAPGQTAVVYAGTRVLGQTTIDRAVSAVPV.

Residues 6–13 (AMSGGVDS) and Leu-32 each bind ATP. Catalysis depends on Cys-101, which acts as the Nucleophile. Cys-101 and Cys-199 are oxidised to a cystine. ATP is bound at residue Gly-125. Residues 148–150 (KDQ) are interaction with tRNA. The active-site Cysteine persulfide intermediate is Cys-199.

This sequence belongs to the MnmA/TRMU family.

Its subcellular location is the cytoplasm. The catalysed reaction is S-sulfanyl-L-cysteinyl-[protein] + uridine(34) in tRNA + AH2 + ATP = 2-thiouridine(34) in tRNA + L-cysteinyl-[protein] + A + AMP + diphosphate + H(+). Catalyzes the 2-thiolation of uridine at the wobble position (U34) of tRNA, leading to the formation of s(2)U34. This Leifsonia xyli subsp. xyli (strain CTCB07) protein is tRNA-specific 2-thiouridylase MnmA.